The sequence spans 302 residues: Homoserine O-acetyltransferase (302 aa).

C142 (acyl-thioester intermediate) is an active-site residue. Substrate is bound by residues K163 and S192. H235 acts as the Proton acceptor in catalysis. The active site involves E237. R249 provides a ligand contact to substrate.

Belongs to the MetA family.

The protein resides in the cytoplasm. The enzyme catalyses L-homoserine + acetyl-CoA = O-acetyl-L-homoserine + CoA. Its pathway is amino-acid biosynthesis; L-methionine biosynthesis via de novo pathway; O-acetyl-L-homoserine from L-homoserine: step 1/1. Transfers an acetyl group from acetyl-CoA to L-homoserine, forming acetyl-L-homoserine. In Geobacillus kaustophilus, this protein is Homoserine O-acetyltransferase.